The following is a 470-amino-acid chain: ATP synthase subunit beta (470 aa).

155–162 (GGAGVGKT) provides a ligand contact to ATP.

This sequence belongs to the ATPase alpha/beta chains family. F-type ATPases have 2 components, CF(1) - the catalytic core - and CF(0) - the membrane proton channel. CF(1) has five subunits: alpha(3), beta(3), gamma(1), delta(1), epsilon(1). CF(0) has three main subunits: a(1), b(2) and c(9-12). The alpha and beta chains form an alternating ring which encloses part of the gamma chain. CF(1) is attached to CF(0) by a central stalk formed by the gamma and epsilon chains, while a peripheral stalk is formed by the delta and b chains.

It localises to the cell inner membrane. The enzyme catalyses ATP + H2O + 4 H(+)(in) = ADP + phosphate + 5 H(+)(out). Functionally, produces ATP from ADP in the presence of a proton gradient across the membrane. The catalytic sites are hosted primarily by the beta subunits. The polypeptide is ATP synthase subunit beta (Oleidesulfovibrio alaskensis (strain ATCC BAA-1058 / DSM 17464 / G20) (Desulfovibrio alaskensis)).